The primary structure comprises 463 residues: Chaperone SurA (463 aa).

Positions 1 to 25 (MTKPFSVVLASLLAITSTISPLASA) are cleaved as a signal peptide. PpiC domains follow at residues 174–276 (GSKY…KLME) and 289–388 (VTEY…QRVG). Disordered regions lie at residues 329-348 (ATAK…GDLG) and 434-463 (GDRA…KPTR). Residues 439 to 452 (NNATAAPAKSADPA) show a composition bias toward low complexity. A compositionally biased stretch (pro residues) spans 453 to 463 (LPAPPPAKPTR).

It is found in the periplasm. The catalysed reaction is [protein]-peptidylproline (omega=180) = [protein]-peptidylproline (omega=0). Chaperone involved in the correct folding and assembly of outer membrane proteins. Recognizes specific patterns of aromatic residues and the orientation of their side chains, which are found more frequently in integral outer membrane proteins. May act in both early periplasmic and late outer membrane-associated steps of protein maturation. This Xanthomonas oryzae pv. oryzae (strain KACC10331 / KXO85) protein is Chaperone SurA.